The primary structure comprises 471 residues: A-type ATP synthase subunit B (471 aa).

The protein belongs to the ATPase alpha/beta chains family. Has multiple subunits with at least A(3), B(3), C, D, E, F, H, I and proteolipid K(x).

It is found in the cell membrane. In terms of biological role, component of the A-type ATP synthase that produces ATP from ADP in the presence of a proton gradient across the membrane. The B chain is a regulatory subunit. The polypeptide is A-type ATP synthase subunit B (Natronomonas pharaonis (strain ATCC 35678 / DSM 2160 / CIP 103997 / JCM 8858 / NBRC 14720 / NCIMB 2260 / Gabara) (Halobacterium pharaonis)).